The chain runs to 478 residues: Cell division protein FtsZ homolog 2-1, chloroplastic (478 aa).

The interval Glu-86–Ala-112 is disordered. Gly-128–Asn-132 lines the GTP pocket. Ser-143 carries the phosphoserine; by PGK1 modification. GTP-binding positions include Gly-217–Gly-219, Glu-248, and Arg-252. A Phosphothreonine; by PGK1 modification is found at Thr-286. Residue Asp-296 coordinates GTP.

This sequence belongs to the FtsZ family. In terms of assembly, aggregates to form a contractile ring-like structure; contraction of the ring was accompanied by an increase in the filament turnover rate. Self-interacts and binds to FTSZ1 in heteromers to form two morphologically distinct types of filaments, termed type-I (smooth filaments) and -II (rough filaments), in a GTP-dependent manner; the GDP-induced disassembly is inhibited by ARC6. Interacts (via C-terminus) with ARC6; this interaction enables ARC3 binding to FTSZ2. Part of a complex made of ARC3, ARC6, FTSZ1 and FTSZ2. Binds to MCD1 in an ARC6-dependent manner. Binds to CDP1/PARC6. Part of a complex made of CDP1/PARC6, ARC3 and FtsZ proteins in the middle of the plastid; this complex enhances the dynamics of Z rings during chloroplast division. Binds to PGK1. Post-translationally, filaments containing FTSZ2-1 are stabilized when in complex with GTP but destabilized after conversion of GTP into GDP; ARC6 conteracts this destabilisation by preventing the dissociation of GDP-bound FTSZ2 molecules thus inhibiting filament disassembly whereas ARC3 promotes GTPase activity thus accelerating the conversion of GTP into GDP and triggering FtsZ2 filaments disassembly. In terms of processing, phosphorylation at Ser-143 is necessary for interactions with ARC3, ARC6, FTSZ1 and FTSZ2-2. Phosphorylations at Ser-143 and Thr-286 are required for the formation of contractile ring at the chloroplast midpoint.

The protein resides in the plastid. It is found in the chloroplast stroma. It localises to the chloroplast thylakoid membrane. With respect to regulation, GTPase activity is enhanced by ARC3. Exhibits GTPase activity which converts GTP ligands to GDP. Component of the plastid division machinery consisting in a binary fission accomplished by the simultaneous constriction of the FtsZ ring on the stromal side of the inner envelope membrane, and the ARC5 ring on the cytosolic side of the outer envelope membrane. Required for plastid division in a dose-dependent manner. In the vegetative shoot apex, at the shoot apical meristem (SAM), where the proplastid-to-chloroplast transition takes place, major contributor of plastid division in the L1 and L3 layers and contributes equally with FTSZ1 in the L2 layer. The chain is Cell division protein FtsZ homolog 2-1, chloroplastic from Arabidopsis thaliana (Mouse-ear cress).